Consider the following 174-residue polypeptide: Ribosome maturation factor RimM (174 aa).

The region spanning 97–169 (GNKFYFHEVI…KVVMDLPEGL (73 aa)) is the PRC barrel domain.

It belongs to the RimM family. Binds ribosomal protein uS19.

It is found in the cytoplasm. Its function is as follows. An accessory protein needed during the final step in the assembly of 30S ribosomal subunit, possibly for assembly of the head region. Essential for efficient processing of 16S rRNA. May be needed both before and after RbfA during the maturation of 16S rRNA. It has affinity for free ribosomal 30S subunits but not for 70S ribosomes. The protein is Ribosome maturation factor RimM of Flavobacterium psychrophilum (strain ATCC 49511 / DSM 21280 / CIP 103535 / JIP02/86).